Here is a 108-residue protein sequence, read N- to C-terminus: UPF0060 membrane protein Spro_2289 (108 aa).

4 consecutive transmembrane segments (helical) span residues 6 to 26 (LLFFATALAEIIGCFLPYLWL), 31 to 51 (SAWLLLPAAASLMLFVWLLTL), 61 to 81 (AAYGGVYVATALLWLRVVDGV), and 85 to 105 (ALDWLGAGVALAGMLIIVSGW).

The protein belongs to the UPF0060 family.

It localises to the cell inner membrane. The sequence is that of UPF0060 membrane protein Spro_2289 from Serratia proteamaculans (strain 568).